Consider the following 596-residue polypeptide: MLKKTPETVSDSDDAEERGSERRHRIHPLTIIRRIFGNAVFSSLTRRILFFNVAATVVLVGGILYLNQFREGLIDARVESLLTQGEIIAGAVSASASVDTNSITINPEKLLELQAGQSITPAPNDEDLSFPINPERVAPVLRRLISPTRTRARLFDADANLLLDSRHLYSRGQVLRFDLPPVTPETQTWGDWFTSMFNRMLQPSSLPQYKEAPGGDGSIYPEVMNALTGVRGAVVRVTEKGELIVSVAVPVQRFRAVLGVLLLSTQAGDIDKIVHAERLAIMRVFGIATLVNIVLSLLLSSTIATPLRRLSAAAIRVRRGARTREEIPDFSARQDEIGNLSIALREMTTALYDRIDAIESFAADVSHELKNPLTSLRSAVETLPRAKTEESKQRLTEIIFHDVRRLDRLISDISDASRLDAELARADASPLDLDVLMKGLVDISRQISTKKKSVAIDYVADRKAGAKTSFVVNGHDLRIGQIVTNLIENARSFVSEESGRITVRLSRHKDRCIVQVEDNGPGIQAEDIDRIFERFYTDRPASEGFGQNSGLGLSISRQIAEAHGGSLRAENVVDKYGVISGARFTLSLPAAETHER.

The interval 1–22 (MLKKTPETVSDSDDAEERGSER) is disordered. Topologically, residues 1-47 (MLKKTPETVSDSDDAEERGSERRHRIHPLTIIRRIFGNAVFSSLTRR) are cytoplasmic. The helical transmembrane segment at 48 to 68 (ILFFNVAATVVLVGGILYLNQ) threads the bilayer. The Periplasmic portion of the chain corresponds to 69–283 (FREGLIDARV…VHAERLAIMR (215 aa)). The chain crosses the membrane as a helical span at residues 284–304 (VFGIATLVNIVLSLLLSSTIA). One can recognise an HAMP domain in the interval 301–356 (STIATPLRRLSAAAIRVRRGARTREEIPDFSARQDEIGNLSIALREMTTALYDRID). Residues 305-596 (TPLRRLSAAA…SLPAAETHER (292 aa)) are Cytoplasmic-facing. The Histidine kinase domain maps to 364–592 (DVSHELKNPL…RFTLSLPAAE (229 aa)). At histidine 367 the chain carries Phosphohistidine.

It is found in the cell inner membrane. The enzyme catalyses ATP + protein L-histidine = ADP + protein N-phospho-L-histidine.. Functionally, member of a two-component regulatory system ChvG/ChvI. Activates ChvI by phosphorylation (Potential). This chain is Sensor protein ChvG (chvG), found in Agrobacterium fabrum (strain C58 / ATCC 33970) (Agrobacterium tumefaciens (strain C58)).